The following is a 695-amino-acid chain: Nucleoprotein (695 aa).

Coiled-coil stretches lie at residues 316–341 and 372–399; these read VNVG…RRHE and QTLA…VEDQ. Disordered stretches follow at residues 423-458, 483-515, and 527-612; these read VQAR…SFVD, TSRE…TNPI, and PVQE…DTRA. Composition is skewed to polar residues over residues 495-505 and 537-552; these read RQSQDLNNSQG and TTDS…SDNE. The PTAP/PSAP motif signature appears at 603–606; that stretch reads PSAP.

It belongs to the filoviruses nucleoprotein family. Homooligomer. Homomultimerizes to form the nucleocapsid. Binds to viral genomic RNA. Interacts with VP35 and VP30 to form the nucleocapsid. Also interacts with VP24 and VP40. Phosphorylated.

The protein resides in the virion. The protein localises to the host cytoplasm. In terms of biological role, encapsidates the genome, protecting it from nucleases. The encapsidated genomic RNA is termed the nucleocapsid and serves as template for transcription and replication. During replication, encapsidation by NP is coupled to RNA synthesis and all replicative products are resistant to nucleases. This is Nucleoprotein (NP) from Chlorocebus aethiops (Green monkey).